The chain runs to 113 residues: Pancreatic progenitor cell differentiation and proliferation factor B (113 aa).

The protein belongs to the PPDPF family.

Probable regulator of exocrine pancreas development. The sequence is that of Pancreatic progenitor cell differentiation and proliferation factor B (ppdpf-b) from Xenopus laevis (African clawed frog).